The following is a 683-amino-acid chain: PTS system mannose-specific EIIBCA component (683 aa).

The PTS EIIB type-1 domain occupies 1 to 89 (MASKLTTTSQ…LKLDGMKHFA (89 aa)). The active-site Phosphocysteine intermediate; for EIIB activity is the Cys28. In terms of domain architecture, PTS EIIC type-1 spans 117–476 (EFLSDTFRPI…NEERDEARAK (360 aa)). 10 helical membrane passes run 126–146 (ILWALLGASLIITLLVLADTF), 162–182 (YVFLHSMWRSVFYFLPIMVGA), 193–213 (WIGAAIPAALLTPEFLALGSA), 225–245 (VLNDYSGQVFPPLIAAIGLYW), 260–280 (MVFVPFFSLLIMIPATAFLLG), 303–323 (FILSIVIPLLYPFLVPLGLHW), 344–364 (PMGAWNFACFGLVTGVFLLSI), 376–396 (LGGMLAGLLGGISEPSLYGVL), 409–429 (GCLAGGIVMGIFDIKAYAFVF), and 442–462 (LGYTIGIAVAFFVSMFLVLAL). One can recognise a PTS EIIA type-1 domain in the interval 550–654 (DPIFAAGKLG…PLITPVVVSN (105 aa)). Catalysis depends on His602, which acts as the Tele-phosphohistidine intermediate; for EIIA activity.

The protein resides in the cell membrane. It carries out the reaction D-mannose(out) + N(pros)-phospho-L-histidyl-[protein] = D-mannose 6-phosphate(in) + L-histidyl-[protein]. Its function is as follows. The phosphoenolpyruvate-dependent sugar phosphotransferase system (sugar PTS), a major carbohydrate active -transport system, catalyzes the phosphorylation of incoming sugar substrates concomitantly with their translocation across the cell membrane. This system is involved in mannose transport. This chain is PTS system mannose-specific EIIBCA component (ptsM), found in Corynebacterium glutamicum (strain ATCC 13032 / DSM 20300 / JCM 1318 / BCRC 11384 / CCUG 27702 / LMG 3730 / NBRC 12168 / NCIMB 10025 / NRRL B-2784 / 534).